The sequence spans 165 residues: Mitochondrial fission process protein 1 (165 aa).

The next 3 helical transmembrane spans lie at 35 to 55 (ALVP…YVTA), 76 to 96 (VCVC…SVAV), and 130 to 150 (IGLS…DLLL).

It belongs to the MTFP1 family.

The protein resides in the mitochondrion inner membrane. Involved in the mitochondrial division probably by regulating membrane fission. Loss-of-function leads to apoptosis. The polypeptide is Mitochondrial fission process protein 1 (mtfp1) (Danio rerio (Zebrafish)).